A 173-amino-acid polypeptide reads, in one-letter code: Co-chaperone protein HscB homolog (173 aa).

Residues 5–77 (CHFALFDLQP…PRRARYLLAI (73 aa)) enclose the J domain.

Belongs to the HscB family. Interacts with HscA and stimulates its ATPase activity.

Functionally, co-chaperone involved in the maturation of iron-sulfur cluster-containing proteins. Seems to help targeting proteins to be folded toward HscA. The chain is Co-chaperone protein HscB homolog from Pseudomonas putida (strain W619).